Reading from the N-terminus, the 420-residue chain is Serine hydroxymethyltransferase (420 aa).

Residues Leu117 and 121–123 each bind (6S)-5,6,7,8-tetrahydrofolate; that span reads GHL. Position 226 is an N6-(pyridoxal phosphate)lysine (Lys226).

This sequence belongs to the SHMT family. As to quaternary structure, homodimer. Pyridoxal 5'-phosphate is required as a cofactor.

The protein resides in the cytoplasm. The catalysed reaction is (6R)-5,10-methylene-5,6,7,8-tetrahydrofolate + glycine + H2O = (6S)-5,6,7,8-tetrahydrofolate + L-serine. It functions in the pathway one-carbon metabolism; tetrahydrofolate interconversion. Its pathway is amino-acid biosynthesis; glycine biosynthesis; glycine from L-serine: step 1/1. Functionally, catalyzes the reversible interconversion of serine and glycine with tetrahydrofolate (THF) serving as the one-carbon carrier. This reaction serves as the major source of one-carbon groups required for the biosynthesis of purines, thymidylate, methionine, and other important biomolecules. Also exhibits THF-independent aldolase activity toward beta-hydroxyamino acids, producing glycine and aldehydes, via a retro-aldol mechanism. The protein is Serine hydroxymethyltransferase of Rhodopirellula baltica (strain DSM 10527 / NCIMB 13988 / SH1).